A 329-amino-acid polypeptide reads, in one-letter code: MKITVIGAGSWGTALALHFSQHGNRVSLWTRNADQVRQMQEARENKRGLPGFSFPETLEVCADLADALKDSGLVLIVTSVAGLRSSAELLKQYGAGHLPVLAACKGFEQDTGLLTFQVLKEVLPDNKKIGVLSGPSFAQELAKQLPCAVVLASENQEWVEELVPQLNTSVMRLYGSTDVIGVAVGGAVKNVMAIATGLSDGLEYGLNARAALVTRGLAEITRLASAMGAQPKTMMGLAGIGDLILTCTGALSRNRRVGLGLAEGKELHQVLVEIGHVSEGVSTIEEVFNTACKYQIDMPITQTLLQLIRKEMTPQQVVERLMERSARFE.

4 residues coordinate NADPH: serine 10, tryptophan 11, arginine 31, and lysine 105. 3 residues coordinate sn-glycerol 3-phosphate: lysine 105, glycine 134, and serine 136. Position 138 (alanine 138) interacts with NADPH. Sn-glycerol 3-phosphate-binding residues include lysine 189, aspartate 242, serine 252, arginine 253, and asparagine 254. Residue lysine 189 is the Proton acceptor of the active site. Arginine 253 contacts NADPH. NADPH contacts are provided by valine 277 and glutamate 279.

Belongs to the NAD-dependent glycerol-3-phosphate dehydrogenase family.

The protein localises to the cytoplasm. The catalysed reaction is sn-glycerol 3-phosphate + NAD(+) = dihydroxyacetone phosphate + NADH + H(+). It carries out the reaction sn-glycerol 3-phosphate + NADP(+) = dihydroxyacetone phosphate + NADPH + H(+). The protein operates within membrane lipid metabolism; glycerophospholipid metabolism. Catalyzes the reduction of the glycolytic intermediate dihydroxyacetone phosphate (DHAP) to sn-glycerol 3-phosphate (G3P), the key precursor for phospholipid synthesis. The polypeptide is Glycerol-3-phosphate dehydrogenase [NAD(P)+] (Neisseria meningitidis serogroup A / serotype 4A (strain DSM 15465 / Z2491)).